The following is a 596-amino-acid chain: Elongation factor 4 (596 aa).

The 183-residue stretch at 2-184 (KHIRNFSIIA…VIVAKIPPPE (183 aa)) folds into the tr-type G domain. GTP-binding positions include 14-19 (DHGKST) and 131-134 (NKID).

Belongs to the TRAFAC class translation factor GTPase superfamily. Classic translation factor GTPase family. LepA subfamily.

The protein localises to the cell inner membrane. It catalyses the reaction GTP + H2O = GDP + phosphate + H(+). Functionally, required for accurate and efficient protein synthesis under certain stress conditions. May act as a fidelity factor of the translation reaction, by catalyzing a one-codon backward translocation of tRNAs on improperly translocated ribosomes. Back-translocation proceeds from a post-translocation (POST) complex to a pre-translocation (PRE) complex, thus giving elongation factor G a second chance to translocate the tRNAs correctly. Binds to ribosomes in a GTP-dependent manner. The protein is Elongation factor 4 of Shewanella putrefaciens (strain CN-32 / ATCC BAA-453).